A 146-amino-acid chain; its full sequence is Large ribosomal subunit protein uL15 (146 aa).

Positions 1–51 (MKLHELKPAKGSRKVRNRVGRGTSSGNGKTSGRGQKGQKARSGGGVRLGFE) are disordered. Over residues 10–19 (KGSRKVRNRV) the composition is skewed to basic residues. Gly residues-rich tracts occupy residues 23 to 35 (TSSGNGKTSGRGQ) and 42 to 51 (SGGGVRLGFE).

Belongs to the universal ribosomal protein uL15 family. Part of the 50S ribosomal subunit.

In terms of biological role, binds to the 23S rRNA. The sequence is that of Large ribosomal subunit protein uL15 from Streptococcus equi subsp. equi (strain 4047).